We begin with the raw amino-acid sequence, 313 residues long: Ribosomal RNA small subunit methyltransferase H (313 aa).

Residues 31 to 33, aspartate 51, phenylalanine 77, aspartate 95, and glutamine 102 each bind S-adenosyl-L-methionine; that span reads GGH.

Belongs to the methyltransferase superfamily. RsmH family.

The protein localises to the cytoplasm. The catalysed reaction is cytidine(1402) in 16S rRNA + S-adenosyl-L-methionine = N(4)-methylcytidine(1402) in 16S rRNA + S-adenosyl-L-homocysteine + H(+). Its function is as follows. Specifically methylates the N4 position of cytidine in position 1402 (C1402) of 16S rRNA. The chain is Ribosomal RNA small subunit methyltransferase H from Xylella fastidiosa (strain M23).